Consider the following 908-residue polypeptide: 26S proteasome non-ATPase regulatory subunit 2 (908 aa).

An N-acetylmethionine modification is found at methionine 1. Residues 1–51 are disordered; that stretch reads MEEGGRDKTPVQSQQPSATTPSGADEKSSGKERRDAGEKDKEQELSEEDKQ. 2 positions are modified to phosphothreonine: threonine 9 and threonine 20. The span at 10 to 22 shows a compositional bias: polar residues; the sequence is PVQSQQPSATTPS. The segment covering 24–51 has biased composition (basic and acidic residues); sequence ADEKSSGKERRDAGEKDKEQELSEEDKQ. Phosphoserine occurs at positions 29 and 147. Tyrosine 194 is subject to Phosphotyrosine. Serine 361 and serine 363 each carry phosphoserine. 5 PC repeats span residues 409 to 442, 443 to 479, 480 to 514, 517 to 551, and 560 to 589; these read SAAASLGMILLWDVDGGLTQIDKYLYSSEDYIKS, GALLACGIVNSGVRNECDPALALLSDYVLHNSNTMRL, GSIFGLGLAYAGSNREDVLTLLLPVMGDSKSSMEV, VTALACGMIAVGSCNGDVTSTILQTIMEKSETELK, and LGLGLNHLGKGEAIEAILAALEVVSEPFRS. Residue lysine 551 is modified to N6-acetyllysine. The segment covering 623–643 has biased composition (basic and acidic residues); sequence KEKEEDKDKKEKKDKDKKEAP. A disordered region spans residues 623–645; the sequence is KEKEEDKDKKEKKDKDKKEAPAD. PC repeat units lie at residues 692-723 and 742-757; these read LALALISVSNPRLNILDTLSKFSHDADPEVSY and AAMLRQLAQYHAKDPN. The required for interaction with UBLCP1 stretch occupies residues 708–903; that stretch reads DTLSKFSHDA…LEGFVILRKN (196 aa).

This sequence belongs to the proteasome subunit S2 family. Component of the 19S proteasome regulatory particle complex. The 26S proteasome consists of a 20S core particle (CP) and two 19S regulatory subunits (RP). The regulatory particle is made of a lid composed of 9 subunits, a base containing 6 ATPases and few additional components including PSMD2. Interacts with RPGRIP1L. Interacts with CRY1 in a KDM8-dependent manner. Interacts (via C-terminus) with phosphatase UBLCP1 (via ubiquitin-like domain); the interaction recruits UBLCP1 to the 19S regulatory particle where it dephosphorylates 19S subunit PSMC2/RPT1 which impairs PSMC2 ATPase activity and disrupts 26S proteasome assembly.

In terms of biological role, component of the 26S proteasome, a multiprotein complex involved in the ATP-dependent degradation of ubiquitinated proteins. This complex plays a key role in the maintenance of protein homeostasis by removing misfolded or damaged proteins, which could impair cellular functions, and by removing proteins whose functions are no longer required. Therefore, the proteasome participates in numerous cellular processes, including cell cycle progression, apoptosis, or DNA damage repair. Its function is as follows. Binds to the intracellular domain of tumor necrosis factor type 1 receptor. The binding domain of TRAP1 and TRAP2 resides outside the death domain of TNFR1. This is 26S proteasome non-ATPase regulatory subunit 2 (Psmd2) from Mus musculus (Mouse).